The following is a 535-amino-acid chain: T-box transcription factor TBX21 (535 aa).

Residues 1–62 are disordered; that stretch reads MGIVEPGCGD…SLGSPYPGGA (62 aa). Ser53 bears the Phosphoserine mark. The residue at position 77 (Tyr77) is a Phosphotyrosine. The segment at 83-109 is disordered; that stretch reads AAGFPGAGESFPPPADAEGYQPGEGYA. Phosphotyrosine is present on Tyr118. The T-box DNA-binding region spans 141 to 326; it reads LNNHLLWSKF…NNPFAKGFRE (186 aa). Tyr220 bears the Phosphotyrosine; by ABL1 mark. Ser225 carries the post-translational modification Phosphoserine. Tyr266 bears the Phosphotyrosine; by ABL1 mark. Thr303 carries the post-translational modification Phosphothreonine. A Phosphotyrosine; by ABL1 modification is found at Tyr305. Lys314 participates in a covalent cross-link: Glycyl lysine isopeptide (Lys-Gly) (interchain with G-Cter in ubiquitin). Residues 449–535 form a disordered region; sequence RPMRTLPMEP…EGQFYNYFPN (87 aa). Residues 503–520 show a composition bias toward low complexity; that stretch reads SPYPSSGDSSSPAGAPSP. Ser513 carries the phosphoserine modification. The residue at position 530 (Tyr530) is a Phosphotyrosine; by ITK.

As to quaternary structure, interacts with RUNX1, RUNX3, ITK, ABL1, RELA, CDK9 and KDM6B. The phosphorylated form (at Thr-303) interacts with NFATC2. Interacts with SMARCA4 in a KDM6B-dependent manner. Interacts with CCTN1. Interacts with USP10. The phosphorylated form (at Tyr-530) interacts with GATA3. In terms of processing, phosphorylations at Ser-53, Tyr-77, Ser-225 and Ser-513 are regulated by mTORC1. Phosphorylation at Tyr-530 is essential for its interaction GATA3. Phosphorylation at Tyr-220, Tyr-266 and Tyr-305 enhances its transcriptional activator activity. Phosphorylation at Thr-303 is required for its interaction with NFATC2. Ubiquitinated at Lys-314, leading to its degradation by the proteasome. Ubiquitination is essential for controlling protein stability, binding to the T-box-binding element of the IFN-gamma promoter, and for interaction with NFATC2 through induction of phosphorylation at Thr-303. Deubiquitinated by USP10 leading to its stabilization. In terms of tissue distribution, T-cell specific.

It localises to the nucleus. In terms of biological role, lineage-defining transcription factor which initiates Th1 lineage development from naive Th precursor cells both by activating Th1 genetic programs and by repressing the opposing Th2 and Th17 genetic programs. Activates transcription of a set of genes important for Th1 cell function, including those encoding IFN-gamma and the chemokine receptor CXCR3. Induces permissive chromatin accessibilty and CpG methylation in IFNG. Activates IFNG and CXCR3 genes in part by recruiting chromatin remodeling complexes including KDM6B, a SMARCA4-containing SWI/SNF-complex, and an H3K4me2-methyltransferase complex to their promoters and all of these complexes serve to establish a more permissive chromatin state conducive with transcriptional activation. Can activate Th1 genes also via recruitment of Mediator complex and P-TEFb (composed of CDK9 and CCNT1/cyclin-T1) in the form of the super elongation complex (SEC) to super-enhancers and associated genes in activated Th1 cells. Inhibits the Th17 cell lineage commitment by blocking RUNX1-mediated transactivation of Th17 cell-specific transcriptinal regulator RORC. Inhibits the Th2 cell lineage commitment by suppressing the production of Th2 cytokines, such as IL-4, IL-5, and IL- 13, via repression of transcriptional regulators GATA3 and NFATC2. Protects Th1 cells from amplifying aberrant type-I IFN response in an IFN-gamma abundant microenvironment by acting as a repressor of type-I IFN transcription factors and type-I IFN-stimulated genes. Acts as a regulator of antiviral B-cell responses; controls chronic viral infection by promoting the antiviral antibody IgG2a isotype switching and via regulation of a broad antiviral gene expression program. Required for the correct development of natural killer (NK) and mucosal-associated invariant T (MAIT) cells. The chain is T-box transcription factor TBX21 (TBX21) from Homo sapiens (Human).